Reading from the N-terminus, the 295-residue chain is Protease HtpX (295 aa).

Helical transmembrane passes span 4–24 (ILLFVATNLAVVLVASITLSL) and 41–61 (GQLLVFCAVFGFAGSLVSLFI). Position 147 (His-147) interacts with Zn(2+). Glu-148 is a catalytic residue. His-151 serves as a coordination point for Zn(2+). 2 consecutive transmembrane segments (helical) span residues 158-178 (VTMALVQGVVNTFVMFFARII) and 198-218 (FVATIVAELVLGILASIIVMW). Glu-224 is a binding site for Zn(2+).

The protein belongs to the peptidase M48B family. Zn(2+) serves as cofactor.

Its subcellular location is the cell inner membrane. This chain is Protease HtpX, found in Pseudomonas entomophila (strain L48).